The following is an 867-amino-acid chain: Alanine--tRNA ligase (867 aa).

4 residues coordinate Zn(2+): His556, His560, Cys658, and His662.

Belongs to the class-II aminoacyl-tRNA synthetase family. Requires Zn(2+) as cofactor.

It localises to the cytoplasm. The catalysed reaction is tRNA(Ala) + L-alanine + ATP = L-alanyl-tRNA(Ala) + AMP + diphosphate. Functionally, catalyzes the attachment of alanine to tRNA(Ala) in a two-step reaction: alanine is first activated by ATP to form Ala-AMP and then transferred to the acceptor end of tRNA(Ala). Also edits incorrectly charged Ser-tRNA(Ala) and Gly-tRNA(Ala) via its editing domain. This Fusobacterium nucleatum subsp. nucleatum (strain ATCC 25586 / DSM 15643 / BCRC 10681 / CIP 101130 / JCM 8532 / KCTC 2640 / LMG 13131 / VPI 4355) protein is Alanine--tRNA ligase.